Consider the following 197-residue polypeptide: Ribosome maturation factor RimP (197 aa).

Belongs to the RimP family.

Its subcellular location is the cytoplasm. Its function is as follows. Required for maturation of 30S ribosomal subunits. The sequence is that of Ribosome maturation factor RimP from Acidovorax ebreus (strain TPSY) (Diaphorobacter sp. (strain TPSY)).